Here is a 403-residue protein sequence, read N- to C-terminus: Acetylornithine aminotransferase (403 aa).

Pyridoxal 5'-phosphate-binding positions include 107–108 and Phe140; that span reads GA. Residue Arg143 participates in N(2)-acetyl-L-ornithine binding. Pyridoxal 5'-phosphate is bound at residue 225–228; sequence DEVQ. N6-(pyridoxal phosphate)lysine is present on Lys254. Ser282 is a N(2)-acetyl-L-ornithine binding site. Thr283 contacts pyridoxal 5'-phosphate.

It belongs to the class-III pyridoxal-phosphate-dependent aminotransferase family. ArgD subfamily. As to quaternary structure, homodimer. Pyridoxal 5'-phosphate serves as cofactor.

It localises to the cytoplasm. It catalyses the reaction N(2)-acetyl-L-ornithine + 2-oxoglutarate = N-acetyl-L-glutamate 5-semialdehyde + L-glutamate. Its pathway is amino-acid biosynthesis; L-arginine biosynthesis; N(2)-acetyl-L-ornithine from L-glutamate: step 4/4. This chain is Acetylornithine aminotransferase, found in Vibrio parahaemolyticus serotype O3:K6 (strain RIMD 2210633).